The primary structure comprises 282 residues: Large ribosomal subunit protein uL2 (282 aa).

Residues 230-282 (AMNPIDHPLGGGEGRSSGGRHPVSPWGMPAKGYKTRDKKKASSRLIVKRRGQK) form a disordered region. Basic residues predominate over residues 265–282 (RDKKKASSRLIVKRRGQK).

The protein belongs to the universal ribosomal protein uL2 family. In terms of assembly, part of the 50S ribosomal subunit. Forms a bridge to the 30S subunit in the 70S ribosome.

Its function is as follows. One of the primary rRNA binding proteins. Required for association of the 30S and 50S subunits to form the 70S ribosome, for tRNA binding and peptide bond formation. It has been suggested to have peptidyltransferase activity; this is somewhat controversial. Makes several contacts with the 16S rRNA in the 70S ribosome. This is Large ribosomal subunit protein uL2 from Desulfovibrio desulfuricans (strain ATCC 27774 / DSM 6949 / MB).